The following is a 259-amino-acid chain: Thiazole synthase (259 aa).

The active-site Schiff-base intermediate with DXP is the lysine 98. Residues glycine 159, alanine 185 to glycine 186, and asparagine 207 to serine 208 contribute to the 1-deoxy-D-xylulose 5-phosphate site.

The protein belongs to the ThiG family. In terms of assembly, homotetramer. Forms heterodimers with either ThiH or ThiS.

The protein localises to the cytoplasm. The enzyme catalyses [ThiS sulfur-carrier protein]-C-terminal-Gly-aminoethanethioate + 2-iminoacetate + 1-deoxy-D-xylulose 5-phosphate = [ThiS sulfur-carrier protein]-C-terminal Gly-Gly + 2-[(2R,5Z)-2-carboxy-4-methylthiazol-5(2H)-ylidene]ethyl phosphate + 2 H2O + H(+). It participates in cofactor biosynthesis; thiamine diphosphate biosynthesis. Functionally, catalyzes the rearrangement of 1-deoxy-D-xylulose 5-phosphate (DXP) to produce the thiazole phosphate moiety of thiamine. Sulfur is provided by the thiocarboxylate moiety of the carrier protein ThiS. In vitro, sulfur can be provided by H(2)S. The sequence is that of Thiazole synthase from Chlorobium phaeobacteroides (strain BS1).